A 993-amino-acid chain; its full sequence is Signal peptide, CUB and EGF-like domain-containing protein 3 (993 aa).

Residues 1–20 form the signal peptide; it reads MGSGRVPGLCLLVLLVHARA. The EGF-like 1; calcium-binding domain maps to 29 to 69; it reads DVDECVEGTDNCHIDAICQNTPRSYKCICKSGYTGDGKHCK. Disulfide bonds link C33/C46, C40/C55, C57/C68, C74/C86, C82/C95, C97/C110, C116/C127, C123/C136, C161/C172, C168/C182, C184/C197, C201/C212, C208/C221, C223/C236, C240/C251, C247/C260, C262/C275, C281/C292, C288/C301, C303/C316, C322/C332, C328/C341, C343/C355, C361/C372, C368/C381, and C383/C397. The region spanning 70–111 is the EGF-like 2; calcium-binding domain; that stretch reads DVDECEREDNAGCVHDCVNIPGNYRCTCYDGFHLAHDGHNCL. Positions 112-148 constitute an EGF-like 3; calcium-binding domain; it reads DVDECAEGNGGCQQSCVNMMGSYECHCREGFFLSDNQ. 3 EGF-like domains span residues 157 to 198, 199 to 237, and 238 to 276; these read EGMN…RDCK, LTCNYGNGGCQHTCDDTEQGPRCGCHIKFVLHTDGKTCI, and ETCAVNNGGCDSKCHDAATGVHCTCPVGFMLQPDRKTCK. The EGF-like 7; calcium-binding domain maps to 277-317; it reads DIDECRLNNGGCDHICRNTVGSFECSCKKGYKLLINERNCQ. The region spanning 318–356 is the EGF-like 8; calcium-binding domain; the sequence is DIDECSFDRTCDHICVNTPGSFQCLCHRGYLLYGITHCG. The EGF-like 9; calcium-binding domain maps to 357–398; sequence DVDECSINRGGCRFGCINTPGSYQCTCPAGQGRLHWNGKDCT. N-linked (GlcNAc...) asparagine glycosylation is found at N417, N464, N685, N756, and N785. 2 disulfide bridges follow: C804/C830 and C857/C878. The CUB domain occupies 804 to 916; sequence CGGELGEFTG…RGFQIPYVTY (113 aa).

Forms homooligomers. Forms heterooligomers with SCUBE1 and SCUBE2. Interacts with TGFBR2 through the CUB domain; this interaction does not affect TGFB1-binding to TGFBR2. Interacts with BMP2, BMP4 and BMP7; the interaction is mediated by the CUB domain. Interacts with BMPR1A, BMPR1B and BMPR2; the interaction with BMPR1A and BMPR1B is BMP2- and BMP4-dependent. In terms of processing, N-glycosylated. Post-translationally, proteolytic cleavage produces a CUB-containing C-terminal fragment that retains the ability to bind to TGFBR2. This reaction is catalyzed in vitro by MMP2 and, to a lesser extent, by MMP9. As to expression, highly expressed in osteoblasts. In normal lung, mainly expressed in bronchial epithelial cells. Tends to be up-regulated in lung cancer cells.

The protein localises to the secreted. The protein resides in the cell surface. In terms of biological role, is a positive regulator of the BMP signaling pathway, required for proper chondrogenesis, osteogenesis and skeletal development. It acts as a coreceptor for BMP ligands, particularly BMP2 and BMP4, facilitating their interactions with BMP type I receptors. It is required for ligand-induced recruitment of BMP receptors to lipid rafts. Binds to TGFBR2 and activates TGFB signaling. In lung cancer cells, could serve as an endogenous autocrine and paracrine ligand of TGFBR2, which could regulate TGFBR2 signaling and hence modulate epithelial-mesenchymal transition and cancer progression. This is Signal peptide, CUB and EGF-like domain-containing protein 3 from Homo sapiens (Human).